Consider the following 356-residue polypeptide: DNA polymerase IV (356 aa).

The UmuC domain occupies Ile-7–Gly-188. Mg(2+)-binding residues include Asp-11 and Asp-106. Residue Glu-107 is part of the active site.

It belongs to the DNA polymerase type-Y family. In terms of assembly, monomer. It depends on Mg(2+) as a cofactor.

It is found in the cytoplasm. The enzyme catalyses DNA(n) + a 2'-deoxyribonucleoside 5'-triphosphate = DNA(n+1) + diphosphate. Functionally, poorly processive, error-prone DNA polymerase involved in untargeted mutagenesis. Copies undamaged DNA at stalled replication forks, which arise in vivo from mismatched or misaligned primer ends. These misaligned primers can be extended by PolIV. Exhibits no 3'-5' exonuclease (proofreading) activity. May be involved in translesional synthesis, in conjunction with the beta clamp from PolIII. This is DNA polymerase IV from Listeria monocytogenes serotype 4b (strain CLIP80459).